A 77-amino-acid polypeptide reads, in one-letter code: Large ribosomal subunit protein uL29 (77 aa).

Belongs to the universal ribosomal protein uL29 family.

In Mycolicibacterium vanbaalenii (strain DSM 7251 / JCM 13017 / BCRC 16820 / KCTC 9966 / NRRL B-24157 / PYR-1) (Mycobacterium vanbaalenii), this protein is Large ribosomal subunit protein uL29.